The primary structure comprises 588 residues: Adenine deaminase (588 aa).

It belongs to the metallo-dependent hydrolases superfamily. Adenine deaminase family. As to quaternary structure, homodimer. Mn(2+) is required as a cofactor.

It carries out the reaction adenine + H2O + H(+) = hypoxanthine + NH4(+). This chain is Adenine deaminase, found in Escherichia coli O157:H7 (strain EC4115 / EHEC).